Reading from the N-terminus, the 357-residue chain is Ribosomal RNA large subunit methyltransferase M (357 aa).

S-adenosyl-L-methionine contacts are provided by residues Ser-183, 216 to 219 (APGG), Asp-235, Asp-255, and Asp-271. Catalysis depends on Lys-300, which acts as the Proton acceptor.

It belongs to the class I-like SAM-binding methyltransferase superfamily. RNA methyltransferase RlmE family. RlmM subfamily. As to quaternary structure, monomer.

The protein localises to the cytoplasm. The catalysed reaction is cytidine(2498) in 23S rRNA + S-adenosyl-L-methionine = 2'-O-methylcytidine(2498) in 23S rRNA + S-adenosyl-L-homocysteine + H(+). Its function is as follows. Catalyzes the 2'-O-methylation at nucleotide C2498 in 23S rRNA. The protein is Ribosomal RNA large subunit methyltransferase M of Pseudomonas fluorescens (strain Pf0-1).